We begin with the raw amino-acid sequence, 133 residues long: Small ribosomal subunit protein uS8 (133 aa).

It belongs to the universal ribosomal protein uS8 family. Part of the 30S ribosomal subunit. Contacts proteins S5 and S12.

Its function is as follows. One of the primary rRNA binding proteins, it binds directly to 16S rRNA central domain where it helps coordinate assembly of the platform of the 30S subunit. The polypeptide is Small ribosomal subunit protein uS8 (Prochlorococcus marinus (strain SARG / CCMP1375 / SS120)).